The primary structure comprises 166 residues: Small ribosomal subunit protein uS5 (166 aa).

Positions 12–75 (YIEKLVQVNR…EAARRNMIQV (64 aa)) constitute an S5 DRBM domain.

Belongs to the universal ribosomal protein uS5 family. In terms of assembly, part of the 30S ribosomal subunit. Contacts proteins S4 and S8.

With S4 and S12 plays an important role in translational accuracy. In terms of biological role, located at the back of the 30S subunit body where it stabilizes the conformation of the head with respect to the body. This is Small ribosomal subunit protein uS5 from Pseudomonas fluorescens (strain SBW25).